The sequence spans 199 residues: Peroxiredoxin-1 (199 aa).

The residue at position 2 (Ser2) is an N-acetylserine. Positions 6–165 (AKIGYPAPNF…ILRLVQAFQF (160 aa)) constitute a Thioredoxin domain. Lys7 carries the N6-acetyllysine; alternate modification. Lys7 participates in a covalent cross-link: Glycyl lysine isopeptide (Lys-Gly) (interchain with G-Cter in SUMO2); alternate. At Lys16 the chain carries N6-acetyllysine. The residue at position 32 (Ser32) is a Phosphoserine. Catalysis depends on Cys52, which acts as the Cysteine sulfenic acid (-SOH) intermediate. Residue Thr90 is modified to Phosphothreonine. A Glycyl lysine isopeptide (Lys-Gly) (interchain with G-Cter in SUMO2) cross-link involves residue Lys120. Lys136 is modified (N6-acetyllysine). The disordered stretch occupies residues 176–199 (GWKPGSDTIKPDVQKSKEYFSKQK). The segment covering 184–199 (IKPDVQKSKEYFSKQK) has biased composition (basic and acidic residues). Lys185 participates in a covalent cross-link: Glycyl lysine isopeptide (Lys-Gly) (interchain with G-Cter in SUMO1). Lys197 carries the post-translational modification N6-acetyllysine.

The protein belongs to the peroxiredoxin family. AhpC/Prx1 subfamily. As to quaternary structure, homodimer; disulfide-linked, upon oxidation. 5 homodimers assemble to form a ring-like decamer. Interacts with GDPD5; forms a mixed-disulfide with GDPD5. Interacts with SESN1 and SESN2. Interacts with FAM107A. In terms of processing, phosphorylated on Thr-90 during the M-phase, which leads to a decrease in enzymatic activity. Acetylation increases reducing activity and resistance to superoxidation. Deacetylated by HDAC6 which decreases reducing activity.

It localises to the cytoplasm. The enzyme catalyses a hydroperoxide + [thioredoxin]-dithiol = an alcohol + [thioredoxin]-disulfide + H2O. Thiol-specific peroxidase that catalyzes the reduction of hydrogen peroxide and organic hydroperoxides to water and alcohols, respectively. Plays a role in cell protection against oxidative stress by detoxifying peroxides and as sensor of hydrogen peroxide-mediated signaling events. Might participate in the signaling cascades of growth factors and tumor necrosis factor-alpha by regulating the intracellular concentrations of H(2)O(2). Reduces an intramolecular disulfide bond in GDPD5 that gates the ability to GDPD5 to drive postmitotic motor neuron differentiation. The polypeptide is Peroxiredoxin-1 (PRDX1) (Cricetulus griseus (Chinese hamster)).